The following is a 1214-amino-acid chain: Sodium bicarbonate cotransporter 3 (1214 aa).

A compositionally biased stretch (basic and acidic residues) spans 1 to 12 (MERFRLEKKLPG). 2 disordered regions span residues 1-22 (MERFRLEKKLPGPDEEAVVDLG) and 52-93 (SKES…PSQR). Residues 1 to 608 (MERFRLEKKL…DFKDALSLQC (608 aa)) are Extracellular-facing. 6 positions are modified to phosphoserine: serine 52, serine 55, serine 84, serine 150, leucine 165, and cysteine 168. Over residues 55 to 72 (SRRRHRHRGHKHHHRRRK) the composition is skewed to basic residues. The segment covering 73-85 (DKESDKEDGRESP) has biased composition (basic and acidic residues). N-linked (GlcNAc...) asparagine glycosylation is present at asparagine 171. Phosphoserine occurs at positions 233, 242, 255, 258, 260, 263, 264, and 267. N-linked (GlcNAc...) asparagine glycosylation occurs at asparagine 269. 3 disordered regions span residues 289–346 (SRAG…IPTV), 362–408 (EEQK…ENST), and 552–572 (FHNGSTPTLGETPKEAAHHAG). Pro residues predominate over residues 303 to 313 (VPTPQNSPPSS). Residues 314-332 (PSISRLTSRSSQESQRQAP) show a composition bias toward low complexity. Residues 379-392 (SPQSAPGNLDNSKS) show a composition bias toward polar residues. Serine 382 is modified (phosphoserine). Residue asparagine 398 is glycosylated (N-linked (GlcNAc...) asparagine). A phosphoserine mark is found at serine 400 and serine 403. Residue asparagine 406 is glycosylated (N-linked (GlcNAc...) asparagine). A phosphoserine mark is found at serine 407 and serine 556. Threonine 557 bears the Phosphothreonine mark. Over residues 563–572 (TPKEAAHHAG) the composition is skewed to basic and acidic residues. The chain crosses the membrane as a helical span at residues 609–629 (LASILFLYCACMSPVITFGGL). Topologically, residues 630 to 637 (LGEATEGR) are cytoplasmic. A helical transmembrane segment spans residues 638 to 658 (ISAIESLFGASLTGIAYSLFA). Over 659–695 (GQPLTILGSTGPVLVFEKILYKFCRDYQLSYLSLRTS) the chain is Extracellular. The chain crosses the membrane as a helical span at residues 696–716 (IGLWTSFLCIVLVATDASSLV). Topologically, residues 717-725 (CYITRFTEE) are cytoplasmic. The chain crosses the membrane as a helical span at residues 726-746 (AFAALICIIFIYEALEKLFDL). A Phosphoserine modification is found at lysine 742. Residues 747–817 (GETYAFNMHN…VFLGSACGHH (71 aa)) lie on the Extracellular side of the membrane. A disulfide bridge connects residues cysteine 766 and cysteine 768. A phosphoserine mark is found at proline 771 and proline 774. Asparagine 776 is a glycosylation site (N-linked (GlcNAc...) asparagine). Alanine 780 carries the phosphoserine modification. N-linked (GlcNAc...) asparagine glycans are attached at residues asparagine 786 and asparagine 791. Cysteine 802 and cysteine 814 are disulfide-bonded. The chain crosses the membrane as a helical span at residues 818–838 (GPYIPDVLFWCVILFFTTFFL). The Cytoplasmic portion of the chain corresponds to 839-861 (SSFLKQFKTKRYFPTKVRSTISD). A helical transmembrane segment spans residues 862 to 882 (FAVFLTIVIMVTIDYLVGVPS). At 883 to 908 (PKLHVPEKFEPTHPERGWIISPLGDN) the chain is on the extracellular side. A helical transmembrane segment spans residues 909 to 929 (PWWTLLIAAIPALLCTILIFM). The Cytoplasmic portion of the chain corresponds to 930 to 954 (DQQITAVIINRKEHKLKKGAGYHLD). Residues 955-975 (LLMVGVMLGVCSVMGLPWFVA) traverse the membrane as a helical segment. Topologically, residues 976–1011 (ATVLSISHVNSLKVESECSAPGEQPKFLGIREQRVT) are extracellular. Residues glutamate 1007, valine 1010, and phenylalanine 1016 each carry the phosphoserine modification. 2 essential for cell membrane localization and transport activity regions span residues 1008 to 1131 (QRVT…KREL) and 1127 to 1214 (TKRE…ETSL). A helical membrane pass occupies residues 1012–1032 (GLMIFILMGLSVFMTSVLKFI). At 1033–1034 (PM) the chain is on the cytoplasmic side. Residues 1035–1055 (PVLYGVFLYMGVSSLKGIQLF) form a helical membrane-spanning segment. Residues 1056-1092 (DRIKLFGMPAKHQPDLIYLRYVPLWKVHIFTVIQLTC) are Extracellular-facing. Phosphoserine is present on residues tyrosine 1073, valine 1077, serine 1102, alanine 1105, valine 1106, proline 1109, methionine 1111, and leucine 1115. The helical transmembrane segment at 1093-1113 (LVLLWVIKVSAAAVVFPMMVL) threads the bilayer. Over 1114 to 1214 (ALVFVRKLMD…KKYVDAETSL (101 aa)) the chain is Cytoplasmic. The tract at residues 1134–1136 (LDD) is CA2-binding. Residues 1144 to 1162 (KKEDDKKKKEKEEAERMLQ) are compositionally biased toward basic and acidic residues. Positions 1144–1169 (KKEDDKKKKEKEEAERMLQDDDDTVH) are disordered. The residue at position 1167 (threonine 1167) is a Phosphothreonine. Phosphoserine is present on residues serine 1176, serine 1188, aspartate 1201, and serine 1213. Positions 1211-1214 (ETSL) match the PDZ-binding motif.

Belongs to the anion exchanger (TC 2.A.31) family. As to quaternary structure, interacts with CFTR through NHERF1/EBP50. Interacts with USH1C. Forms a complex with ATP6V1B1 and NHERF1/EBP50. Interacts in a pH dependent-manner with CA2/carbonic anhydrase 2. In terms of tissue distribution, highly expressed in testis and spleen. Also expressed in retina, colon, small intestine, ovary, thymus, prostate, muscle, heart and kidney. As to expression, expressed in skeletal muscle and heart muscle.

The protein resides in the basolateral cell membrane. The protein localises to the apical cell membrane. Its subcellular location is the cell projection. It is found in the stereocilium. It localises to the cell membrane. It catalyses the reaction hydrogencarbonate(in) + Na(+)(in) = hydrogencarbonate(out) + Na(+)(out). Its activity is regulated as follows. Transporter activity is regulated by CA2/carbonic anhydrase 2, cAMP and PKA. Insensitive to stilbene derivatives. Inhibited by 5-(N-ethyl-N-isopropyl)-amiloride (EIPA). Functionally, electroneutral sodium- and bicarbonate-dependent cotransporter with a Na(+):HCO3(-) 1:1 stoichiometry. Mediates the sodium-dependent bicarbonate transport important for pH recovery after acid load as well as for regulation of steady-state pH in the duodenum and vascular smooth muscle cells. Plays a key role in macrophage acidification, mediating bicarbonate import into the cytoplasm which is crucial for net acid extrusion and maintenance of cytoplasmic pH during phagocytosis. Provides cellular bicarbonate for de novo purine and pyrimidine synthesis and is a key mediator of de novo nucleotide synthesis downstream of mTORC1 signaling in proliferating cells. Plays a key role in macrophage acidification, mediating bicarbonate import into the cytoplasm which is crucial for net acid extrusion and maintenance of cytoplasmic pH during phagocytosis. The chain is Sodium bicarbonate cotransporter 3 (SLC4A7) from Homo sapiens (Human).